The primary structure comprises 78 residues: Large ribosomal subunit protein bL28 (78 aa).

The interval 1–21 is disordered; it reads MSKVCQVTGKRPITGHNVSHA.

Belongs to the bacterial ribosomal protein bL28 family.

The chain is Large ribosomal subunit protein bL28 from Cellvibrio japonicus (strain Ueda107) (Pseudomonas fluorescens subsp. cellulosa).